A 393-amino-acid chain; its full sequence is Stearoyl-[acyl-carrier-protein] 9-desaturase, chloroplastic (393 aa).

The N-terminal 31 residues, 1–31, are a transit peptide targeting the chloroplast; the sequence is MASMVAFRPEAFLCFSPPKTTRSTRSPRISM. Residues Glu135, Glu173, His176, Glu226, Glu259, and His262 each contribute to the Fe cation site.

The protein belongs to the fatty acid desaturase type 2 family. Homodimer. The cofactor is Fe(2+).

The protein localises to the plastid. The protein resides in the chloroplast. It catalyses the reaction octadecanoyl-[ACP] + 2 reduced [2Fe-2S]-[ferredoxin] + O2 + 2 H(+) = (9Z)-octadecenoyl-[ACP] + 2 oxidized [2Fe-2S]-[ferredoxin] + 2 H2O. Its pathway is lipid metabolism; fatty acid metabolism. Converts stearoyl-ACP to oleoyl-ACP by introduction of a cis double bond between carbons 9 and 10 of the acyl chain. The protein is Stearoyl-[acyl-carrier-protein] 9-desaturase, chloroplastic of Elaeis guineensis var. tenera (Oil palm).